The sequence spans 554 residues: Potassium/proton antiporter CemA (554 aa).

A helical transmembrane segment spans residues 50 to 70 (SLFVVLFIPFFINIFTKIYVF). Residues 113-410 (KTENFFPEKP…VPYNFNKNTE (298 aa)) form an insert region. 3 consecutive transmembrane segments (helical) span residues 429–449 (ISAI…LFLL), 479–499 (MLLF…EVIF), and 514–534 (IIFL…KYWI).

The protein belongs to the CemA family.

Its subcellular location is the plastid. The protein resides in the chloroplast inner membrane. The catalysed reaction is K(+)(in) + H(+)(out) = K(+)(out) + H(+)(in). Its function is as follows. Contributes to K(+)/H(+) antiport activity by supporting proton efflux to control proton extrusion and homeostasis in chloroplasts in a light-dependent manner to modulate photosynthesis. Prevents excessive induction of non-photochemical quenching (NPQ) under continuous-light conditions. Indirectly promotes efficient inorganic carbon uptake into chloroplasts. The chain is Potassium/proton antiporter CemA from Stigeoclonium helveticum (Green alga).